Consider the following 504-residue polypeptide: MCGIVGIVSQSPVNQSIYDALTLLQHRGQDAAGIVTVDDENRFRLRKANGLVSDVFEQVHMLRLQGNAGIGHVRYPTAGSSSVSEAQPFYVNSPYGLTLVHNGNLTNSSELKEKLFRRARRHVNTNSDSELLLNILANHLDHFEKYQLDPQDVFSAVKQTHQDIRGAYACIAMIIGHGMVAFRDPNGIRPLVLGKREENGKTEYMFASESIALDTVGFEFVRDVQPGEAIYVTFEGEMYAQQCADKPTLTPCIFEYVYFARPDSCIDGVSVYAARVHMGQRLGEKIAREWADVDDIDVVIPVPETSNDIALRIARVLNKPYRQGFVKNRYVGRTFIMPGQALRVSSVRRKLNTIASEFKDKNVLLVDDSIVRGTTSEQIVEMARAAGAKKIYFASAAPEIRYPNVYGIDMPTKNELIAYGRDVDEIAKLIGVDKLIFQDLDALTGSVQQENPSIQDFDCSVFTGVYVTGDITPEYLDNIAEQRNDIAKKKREKDATNLEMHNEK.

The active-site Nucleophile is the Cys-2. Residues 2 to 235 enclose the Glutamine amidotransferase type-2 domain; sequence CGIVGIVSQS…PGEAIYVTFE (234 aa). 3 residues coordinate Mg(2+): Thr-305, Asp-367, and Asp-368.

The protein in the C-terminal section; belongs to the purine/pyrimidine phosphoribosyltransferase family. Requires Mg(2+) as cofactor.

The enzyme catalyses 5-phospho-beta-D-ribosylamine + L-glutamate + diphosphate = 5-phospho-alpha-D-ribose 1-diphosphate + L-glutamine + H2O. Its pathway is purine metabolism; IMP biosynthesis via de novo pathway; N(1)-(5-phospho-D-ribosyl)glycinamide from 5-phospho-alpha-D-ribose 1-diphosphate: step 1/2. Functionally, catalyzes the formation of phosphoribosylamine from phosphoribosylpyrophosphate (PRPP) and glutamine. The protein is Amidophosphoribosyltransferase of Pasteurella multocida (strain Pm70).